A 328-amino-acid polypeptide reads, in one-letter code: Phosphate acyltransferase (328 aa).

It belongs to the PlsX family. In terms of assembly, homodimer. Probably interacts with PlsY.

Its subcellular location is the cytoplasm. It catalyses the reaction a fatty acyl-[ACP] + phosphate = an acyl phosphate + holo-[ACP]. The protein operates within lipid metabolism; phospholipid metabolism. In terms of biological role, catalyzes the reversible formation of acyl-phosphate (acyl-PO(4)) from acyl-[acyl-carrier-protein] (acyl-ACP). This enzyme utilizes acyl-ACP as fatty acyl donor, but not acyl-CoA. In Staphylococcus haemolyticus (strain JCSC1435), this protein is Phosphate acyltransferase.